Here is a 333-residue protein sequence, read N- to C-terminus: Torsin-1A (333 aa).

The signal sequence occupies residues 1–20 (MKLGRATLALLLLVPCVVRA). Positions 92–252 (KPKKPLTLSL…VSVFNNKNSG (161 aa)) are interaction with SNAPIN. Residues Asn-144 and Asn-159 are each glycosylated (N-linked (GlcNAc...) asparagine). Residues 252–333 (GFWHSSLIDR…FTKLDYYLDD (82 aa)) form an interaction with KLC1 region. The tract at residues 313–333 (KVFSDKGCKTVFTKLDYYLDD) is interaction with SYNE3.

This sequence belongs to the ClpA/ClpB family. Torsin subfamily. As to quaternary structure, homohexamer. Interacts with TOR1B; the interaction may be specific of neural tissues. Interacts (ATP-bound) with TOR1AIP1 and TOR1AIP2; the interactions induce ATPase activity. Interacts with KLHL14; preferentially when ATP-free. Interacts with KLC1 (via TPR repeats); the interaction associates TOR1A with the kinesin oligomeric complex. Interacts with COPS4; the interaction associates TOR1A with the CSN complex. Interacts with SNAPIN; the interaction is direct and associates SNAPIN with the CSN complex. Interacts with STON2. Interacts (ATP-bound) with SYNE3 (via KASH domain); the interaction is required for SYNE3 nuclear envelope localization. Interacts with VIM; the interaction associates TOR1A with the cytoskeleton. Interacts with PLEC. Interacts (ATP-bound) with SLC6A3; regulates SLC6A3 transport to the plasma membrane. N-glycosylated. As to expression, expressed in brain (at protein level).

It localises to the endoplasmic reticulum lumen. The protein localises to the nucleus inner membrane. The protein resides in the cell projection. Its subcellular location is the growth cone. It is found in the cytoplasmic vesicle membrane. It localises to the cytoplasmic vesicle. The protein localises to the secretory vesicle. The protein resides in the synaptic vesicle. It catalyses the reaction ATP + H2O = ADP + phosphate + H(+). Protein with chaperone functions important for the control of protein folding, processing, stability and localization as well as for the reduction of misfolded protein aggregates. Involved in the regulation of synaptic vesicle recycling, controls STON2 protein stability in collaboration with the COP9 signalosome complex (CSN). In the nucleus, may link the cytoskeleton with the nuclear envelope, this mechanism seems to be crucial for the control of nuclear polarity, cell movement and, specifically in neurons, nuclear envelope integrity. Participates in the cellular trafficking and may regulate the subcellular location of multipass membrane proteins such as the dopamine transporter SLC6A3, leading to the modulation of dopamine neurotransmission. In the endoplasmic reticulum, plays a role in the quality control of protein folding by increasing clearance of misfolded proteins such as SGCE variants or holding them in an intermediate state for proper refolding. May have a redundant function with TOR1B in non-neural tissues. This is Torsin-1A (Tor1a) from Rattus norvegicus (Rat).